The chain runs to 196 residues: Probable thymidylate kinase (196 aa).

Position 7–14 (7–14 (GIDGAGKT)) interacts with ATP.

It belongs to the thymidylate kinase family.

The catalysed reaction is dTMP + ATP = dTDP + ADP. The chain is Probable thymidylate kinase (tmk) from Archaeoglobus fulgidus (strain ATCC 49558 / DSM 4304 / JCM 9628 / NBRC 100126 / VC-16).